A 109-amino-acid chain; its full sequence is Defensin-B5 (109 aa).

The first 20 residues, Met-1–Ala-20, serve as a signal peptide directing secretion. The disordered stretch occupies residues Gln-21 to Val-44. Residues Gln-21–Leu-70 constitute a propeptide that is removed on maturation. Residues Ser-34–Val-44 show a composition bias toward basic and acidic residues. Disulfide bonds link Cys-73–Cys-101, Cys-80–Cys-95, and Cys-85–Cys-102. Residues Ala-107–Pro-109 constitute a propeptide that is removed on maturation.

It belongs to the beta-defensin family. As to expression, highly expressed in kidney, and expressed at lower levels in testis.

The protein localises to the secreted. Functionally, has antimicrobial activity. This Ornithorhynchus anatinus (Duckbill platypus) protein is Defensin-B5.